We begin with the raw amino-acid sequence, 285 residues long: Inositol oxygenase (285 aa).

A substrate-binding site is contributed by arginine 29. Residue serine 33 is modified to Phosphoserine. Aspartate 85 to serine 87 is a binding site for substrate. Histidine 98, histidine 123, and aspartate 124 together coordinate Fe cation. Substrate is bound by residues lysine 127 and glycine 141–aspartate 142. Fe cation is bound by residues histidine 194, histidine 220, and aspartate 253. Residue histidine 220–serine 221 participates in substrate binding.

This sequence belongs to the myo-inositol oxygenase family. Requires Fe cation as cofactor. Kidney specific.

It localises to the cytoplasm. The catalysed reaction is myo-inositol + O2 = D-glucuronate + H2O + H(+). It functions in the pathway polyol metabolism; myo-inositol degradation into D-glucuronate; D-glucuronate from myo-inositol: step 1/1. The chain is Inositol oxygenase (MIOX) from Homo sapiens (Human).